A 1343-amino-acid polypeptide reads, in one-letter code: MSPLETNPLSPETAMREPAETSTTEEQASTPHAADEKKILSDLSAPSSTTATPADKEHRPKSSSSNNAVSVNEVDALIAHLPEDERQVLKTQLEEIKVNISFFGLWRYATKMDILIMVISTICAIAAGAALPLFTAPSTFQRIMLYQISYDEFYDELTKNVLYFVYLGIGEFVTVYVSTVGFIYTGEHATQKIREYYLESILRQNIGYFDKLGAGEVTTRITADTNLIQDGISEKVGLTLTALATFVTAFIIAYVKYWKLALICSSTIVALVLTMGGGSQFIIKYSKKSLDSYGAGGTVAEEVISSIRNATAFGTQDKLAKQYEVHLDEAEKWGTKNQIVMGFMIGAMFGLMYSNYGLGFWMGSRFLVDGAVDVGDILTVLMAILIGSFSLGNVSPNAQAFTNAVAAAAKIFGTIDRQSPLDPYSNEGKTLDHFEGHIELRNVKHIYPSRPEVTVMEDVSLSMPAGKTTALVGPSGSGKSTVVGLVERFYMPVRGTVLLDGHDIKDLNLRWLRQQISLVSQEPVLFGTTIYKNIRHGLIGTKYENESEDKVRELIENAAKMANAHDFITALPEGYETNVGQRGFLLSGGQKQRIAIARAVVSDPKILLLDEATSALDTKSEGVVQAALERAAEGRTTIVIAHRLSTIKTAHNIVVLVNGKIAEQGTHDELVDRGGAYRKLVEAQRINEQKEADALEDADAEDLTNADIAKIKTASSASSDLDGKPTTIDRTGTHKSVSSAILSKRPPETTPKYSLWTLLKFVASFNRPEIPYMLIGLVFSVLAGGGQPTQAVLYAKAISTLSLPESQYSKLRHDADFWSLMFFVVGIIQFITQSTNGAAFAVCSERLIRRARSTAFRTILRQDIAFFDKEENSTGALTSFLSTETKHLSGVSGVTLGTILMTSTTLGAAIIIALAIGWKLALVCISVVPVLLACGFYRFYMLAQFQSRSKLAYEGSANFACEATSSIRTVASLTRERDVWEIYHAQLDAQGRTSLISVLRSSLLYASSQALVFFCVALGFWYGGTLLGHHEYDIFRFFVCFSEILFGAQSAGTVFSFAPDMGKAKNAAAEFRRLFDRKPQIDNWSEEGEKLETVEGEIEFRNVHFRYPTRPEQPVLRGLDLTVKPGQYVALVGPSGCGKSTTIALLERFYDAIAGSILVDGKDISKLNINSYRSFLSLVSQEPTLYQGTIKENILLGIVEDDVPEEFLIKACKDANIYDFIMSLPEGFNTVVGSKGGMLSGGQKQRVAIARALLRDPKILLLDEATSALDSESEKVVQAALDAAARGRTTIAVAHRLSTIQKADVIYVFDQGKIVESGTHSELVQKKGRYYELVNLQSLGKGH.

Polar residues predominate over residues 1–10 (MSPLETNPLS). The disordered stretch occupies residues 1-67 (MSPLETNPLS…HRPKSSSSNN (67 aa)). A compositionally biased stretch (low complexity) spans 20-31 (ETSTTEEQASTP). Asparagine 99 is a glycosylation site (N-linked (GlcNAc...) asparagine). A run of 4 helical transmembrane segments spans residues 114-134 (ILIMVISTICAIAAGAALPLF), 163-183 (YFVYLGIGEFVTVYVSTVGFI), 235-255 (KVGLTLTALATFVTAFIIAYV), and 263-283 (ICSSTIVALVLTMGGGSQFII). The 289-residue stretch at 115 to 403 (LIMVISTICA…VSPNAQAFTN (289 aa)) folds into the ABC transmembrane type-1 1 domain. Asparagine 309 carries N-linked (GlcNAc...) asparagine glycosylation. Transmembrane regions (helical) follow at residues 339 to 359 (IVMGFMIGAMFGLMYSNYGLG) and 366 to 386 (FLVDGAVDVGDILTVLMAILI). In terms of domain architecture, ABC transporter 1 spans 438–683 (IELRNVKHIY…GGAYRKLVEA (246 aa)). 473 to 480 (GPSGSGKS) serves as a coordination point for ATP. The N-linked (GlcNAc...) asparagine glycan is linked to asparagine 545. Transmembrane regions (helical) follow at residues 773–793 (MLIGLVFSVLAGGGQPTQAVL) and 820–840 (LMFFVVGIIQFITQSTNGAAF). In terms of domain architecture, ABC transmembrane type-1 2 spans 774-1063 (LIGLVFSVLA…VFSFAPDMGK (290 aa)). Asparagine 872 carries an N-linked (GlcNAc...) asparagine glycan. 4 helical membrane passes run 887–907 (HLSGVSGVTLGTILMTSTTLG), 920–942 (LALVCISVVPVLLACGFYRFYML), 1010–1030 (ALVFFCVALGFWYGGTLLGHH), and 1037–1057 (FFVCFSEILFGAQSAGTVFSF). The N-linked (GlcNAc...) asparagine glycan is linked to asparagine 1083. The 239-residue stretch at 1098 to 1336 (IEFRNVHFRY…KGRYYELVNL (239 aa)) folds into the ABC transporter 2 domain. 1133-1140 (GPSGCGKS) contacts ATP.

This sequence belongs to the ABC transporter superfamily. ABCB family. Multidrug resistance exporter (TC 3.A.1.201) subfamily.

It localises to the cell membrane. Fenamirol efflux transporter activity is inhibited by the cyclosporin derivative PSC 833, nigericin, reserpine and valinomycin. The effect of reserpine is transiant, while that of the cyclosporin derivative PSC 833, nigericin and valinomycin is proportional to the time of exposure. Cyclohexinmide has inhibitory effect only when applied prior to addition of the fungicide. In terms of biological role, pleiotropic ABC efflux transporter involved in the protection of the cells against a wide range of toxic compounds. Confers resistance to the azole fenarimol via efflux transport. May also be involved in the secretion of penicillin. The sequence is that of ABC multidrug transporter atrD from Emericella nidulans (strain FGSC A4 / ATCC 38163 / CBS 112.46 / NRRL 194 / M139) (Aspergillus nidulans).